Reading from the N-terminus, the 146-residue chain is Hemoglobin subunit beta-2 (146 aa).

One can recognise a Globin domain in the interval 2–146 (KWTDKERAVI…VVSALGKQYC (145 aa)). The heme b site is built by H63 and H92.

The protein belongs to the globin family. As to quaternary structure, heterotetramer of two alpha chains and two beta chains. Red blood cells.

Functionally, involved in oxygen transport from gills to the various peripheral tissues. In Lycodes reticulatus (Arctic eelpout), this protein is Hemoglobin subunit beta-2 (hbb2).